Reading from the N-terminus, the 72-residue chain is MAKDDVIEIDGNVVEALPNATFKVELDNKHIILCHIAGKMRMHYIKIMPGDRVKVELTPYSLDKGRITYRYK.

The S1-like domain maps to 1 to 72 (MAKDDVIEID…DKGRITYRYK (72 aa)).

This sequence belongs to the IF-1 family. As to quaternary structure, component of the 30S ribosomal translation pre-initiation complex which assembles on the 30S ribosome in the order IF-2 and IF-3, IF-1 and N-formylmethionyl-tRNA(fMet); mRNA recruitment can occur at any time during PIC assembly.

It localises to the cytoplasm. In terms of biological role, one of the essential components for the initiation of protein synthesis. Stabilizes the binding of IF-2 and IF-3 on the 30S subunit to which N-formylmethionyl-tRNA(fMet) subsequently binds. Helps modulate mRNA selection, yielding the 30S pre-initiation complex (PIC). Upon addition of the 50S ribosomal subunit IF-1, IF-2 and IF-3 are released leaving the mature 70S translation initiation complex. This Campylobacter fetus subsp. fetus (strain 82-40) protein is Translation initiation factor IF-1.